The following is a 503-amino-acid chain: Nondiscriminating glutamyl-tRNA synthetase EARS2, mitochondrial (503 aa).

The N-terminal 22 residues, 1–22, are a transit peptide targeting the mitochondrion; it reads MKILRGVSRQMCTSRPEVRVRF. Residue 21–23 participates in L-glutamate binding; that stretch reads RFA. A 'HIGH' region motif is present at residues 26–34; it reads PTGFLHLGG. Residue His31 participates in ATP binding. Residues Glu57, 209-213, and Arg227 contribute to the L-glutamate site; that span reads YHLAS. ATP is bound by residues Glu230 and 265-269; that span reads KLSKR. The 'KMSKS' region motif lies at 265-269; the sequence is KLSKR.

This sequence belongs to the class-I aminoacyl-tRNA synthetase family. Glutamate--tRNA ligase type 1 subfamily.

It localises to the mitochondrion matrix. The catalysed reaction is tRNA(Glx) + L-glutamate + ATP = L-glutamyl-tRNA(Glx) + AMP + diphosphate. The enzyme catalyses tRNA(Glu) + L-glutamate + ATP = L-glutamyl-tRNA(Glu) + AMP + diphosphate. It carries out the reaction tRNA(Gln) + L-glutamate + ATP = L-glutamyl-tRNA(Gln) + AMP + diphosphate. In terms of biological role, non-discriminating glutamyl-tRNA synthetase that catalyzes aminoacylation of both mitochondrial tRNA(Glu) and tRNA(Gln) and participates in RNA aminoacylation for mitochondrial protein translation. Attachs glutamate to tRNA(Glu) or tRNA(Gln) in a two-step reaction: glutamate is first activated by ATP to form Glu-AMP and then transferred to the acceptor end of tRNA(Glu) or tRNA(Gln). This Danio rerio (Zebrafish) protein is Nondiscriminating glutamyl-tRNA synthetase EARS2, mitochondrial.